The primary structure comprises 551 residues: Cleavage and polyadenylation specificity factor subunit 6 (551 aa).

The RRM domain occupies 81–161 (IALYIGNLTW…QNPVVTPCNK (81 aa)). T157 is modified (phosphothreonine). Residues 169-180 (MQSRKTTQSGQM) are compositionally biased toward polar residues. Disordered stretches follow at residues 169-410 (MQSR…TPLS) and 477-551 (LHGI…YRHR). Composition is skewed to pro residues over residues 237 to 265 (TRPPLGPPGPPGPPGPPPPGQVLPPPLAG), 285 to 366 (GQPP…PPPA), and 377 to 388 (GPPPTDPYGRPP). Composition is skewed to basic and acidic residues over residues 389-404 (PYDRGDYGPPGREMDA) and 489-503 (SRRERSRERDHSRSR). Residues S494, S500, S511, S513, and S525 each carry the phosphoserine modification. The segment covering 504–514 (EKSRRHKSRSR) has biased composition (basic residues). The segment covering 515–551 (DRHDDYYRERSRERERHRDRDRDRDRERDREREYRHR) has biased composition (basic and acidic residues).

It belongs to the RRM CPSF6/7 family. In terms of assembly, component of the cleavage factor Im (CFIm) complex.

The protein localises to the nucleus. It is found in the nucleoplasm. Its subcellular location is the nucleus speckle. The protein resides in the cytoplasm. Its function is as follows. Component of the cleavage factor Im (CFIm) complex that functions as an activator of the pre-mRNA 3'-end cleavage and polyadenylation processing required for the maturation of pre-mRNA into functional mRNAs. CFIm contributes to the recruitment of multiprotein complexes on specific sequences on the pre-mRNA 3'-end, so called cleavage and polyadenylation signals (pA signals). Most pre-mRNAs contain multiple pA signals, resulting in alternative cleavage and polyadenylation (APA) producing mRNAs with variable 3'-end formation. The CFIm complex acts as a key regulator of cleavage and polyadenylation site choice during APA through its binding to 5'-UGUA-3' elements localized in the 3'-untranslated region (UTR) for a huge number of pre-mRNAs. Plays a role in mRNA export. The polypeptide is Cleavage and polyadenylation specificity factor subunit 6 (Gallus gallus (Chicken)).